The chain runs to 396 residues: Inhibitory POU protein (396 aa).

Residues 86–95 carry the POU-IV box motif; that stretch reads RAEALAAVDI. Residues 222–299 enclose the POU-specific domain; that stretch reads DTDTDPRELE…ILQAWLEEAE (78 aa). Residues 302–328 are disordered; the sequence is AKNKRRDPDAPSVLPAGEKKRKRTSIA. A DNA-binding region (homeobox; atypical) is located at residues 320-377; sequence KKRKRTSIAAPEKRSLEAYFAVQPRPSGEKIAAIAEKLDLKKNVVRVWFCNQRQKQKR.

The protein belongs to the POU transcription factor family. Class-4 subfamily. In terms of tissue distribution, coexpressed with vvl in overlapping subsets of neurons in the embryonic central nervous system. Expressed in olfactory neurons.

It localises to the nucleus. Its function is as follows. Modulates gene transcription; simultaneously generates both a specific activator and an inhibitor of gene transcription, capable of modulating two distinct regulatory programs during neural development. Has a role in olfactory behavior. The chain is Inhibitory POU protein (acj6) from Drosophila melanogaster (Fruit fly).